We begin with the raw amino-acid sequence, 103 residues long: Cell division protein FtsB (103 aa).

The Cytoplasmic portion of the chain corresponds to 1–3 (MGK). The helical transmembrane segment at 4-21 (LTLLLLALLVWLQYSLWF) threads the bilayer. Over 22 to 103 (GKNGIHDYSR…RAGGPAQNNR (82 aa)) the chain is Periplasmic. A coiled-coil region spans residues 38 to 62 (VQQATNAKLKARNDQLFAEIDDLNG).

The protein belongs to the FtsB family. As to quaternary structure, part of a complex composed of FtsB, FtsL and FtsQ.

It is found in the cell inner membrane. Essential cell division protein. May link together the upstream cell division proteins, which are predominantly cytoplasmic, with the downstream cell division proteins, which are predominantly periplasmic. This chain is Cell division protein FtsB, found in Cronobacter sakazakii (strain ATCC BAA-894) (Enterobacter sakazakii).